A 1531-amino-acid chain; its full sequence is MALRGFCSADGSDPLWDWNVTWYTSNPDFTKCFQNTVLVWVPCFYLWACFPFYFLYLSRHDRGYIQMTLLNKTKTALGFLLWIVCWADLFYSFWERSRGIFLAPVFLVSPTLLGITMLLATFLIQLERRKGVQSSGIMLTFWLVALLCALAILRSKIMTALKEDVQVDLFRDMTFYVYFSLVLIQLVLSCFSDRSPLFSETIHDPNPCPESSASFLSRITFWWITGLIVRGYRQPLEGSDLWSLNKEDTSEQVVPVLVKNWKKECAKTRKQPVKVVYSSKDPAQPKDSSKVDANEEVEALIVKSPQKEWNPSLFKVLYKTFGPYFLMSFFFKAIHDLMMFSGPEILKLLINFVNDTKAPDWQGYFYTALLFVAACLQTLVLHQYFHICFVSGMRIKTAVIGAVYRKALVITNAARKSSTVGEIVNLMSVDAQRFMDLATYINMIWSAPLQVILALYLLWRNLGPPILAGVAVMVLMVPVNAVMAMKTKTYQVAHMKSKDNRIKLMNEILNGIKVLKLYAWELAFKDKVLAIRQEELKVLKKSAYLAAVGTFTWVCTPFLVALCTFAVYVTIDKNNVLDAQKAFVSLALFNILRFPLNILPMVISSIVQASVSLKRLRIFLSHEELEPDSIERRPVKDGGDTNSITVRNATFTWARSDPPTLNGITFSIPEGALVAVVGQVGCGKSSLLSALLAEMDKVEGHVALKGSVAYVPQQAWIQNDSLQENILFGCQLEEPYYRSVIQACALLPDLEILPSGDRTEIGEKGVNLSGGQKQRVSLARAVYCNADIYLFDDPLSAVDAHVGKHIFENVIGPKGMLKNKTRILVTHSMSYLPQVDVIIVMSGGKISEMGSYQELLARDGAFAEFLRTYASAEQEQDPEDNGVTGVSGPGKEAKQMENGMLVTDSAGKQLQRQLSSSSSYSGDVSRQHNSTAELQKDGAKKEETWKLMEADKAQTGQVKLSVYWDYMKAIGLFISFLSIFLFICNHVAALASNYWLSLWTDDPIVNGTQEHTKVRLSVYGALGISQGIAVFGYSMAVSIGGILASRCLHVDLLHSILRSPMSFFERTPSGNLVNRFSKELDTVDSMIPEVIKMFMGSLFNVIGACIVILLATPIAAIIIPPLGLIYFFVQRFYVASSRQLKRLESVSRSPVYSHFNETLLGVSVIRAFEEQERFIHQSDLKVDENQKAYYPSIVANRWLAVRLECVGNCIVLFAALFAVISRHSLSAGLVGLSVSYSLQVTTYLNWLVRMSSEMETNIVAVERLKEYSETEKEAPWQIQETAPPSNWPQVGRVEFRNYCLRYREDLDFVLRHINVTINGGEKVGIVGRTGAGKSSLTLGLFRINESAEGEIIIDGINIARIGLHDLRFKITIIPQDPVLFSGSLRMNLDPFSQYSDEEVWTSLELAHLKGFVSALPDKLDHECAEGGENLSVGQRQLVCLARALLRKTKILVLDEATAAVDLETDDLIQSTIRTQFEDCTVLTIAHRLNTIMDYTRVIVLDKGEIQEYGAPSDLLQQRGLFYNMARDAGLV.

At 1-33 (MALRGFCSADGSDPLWDWNVTWYTSNPDFTKCF) the chain is on the extracellular side. Residue N19 is glycosylated (N-linked (GlcNAc...) asparagine). Residues 34-54 (QNTVLVWVPCFYLWACFPFYF) traverse the membrane as a helical segment. Topologically, residues 55-74 (LYLSRHDRGYIQMTLLNKTK) are cytoplasmic. Residues 75-95 (TALGFLLWIVCWADLFYSFWE) traverse the membrane as a helical segment. Over 96-100 (RSRGI) the chain is Extracellular. The chain crosses the membrane as a helical span at residues 101 to 121 (FLAPVFLVSPTLLGITMLLAT). Residues 122–133 (FLIQLERRKGVQ) are Cytoplasmic-facing. The helical transmembrane segment at 134–154 (SSGIMLTFWLVALLCALAILR) threads the bilayer. Over 155-172 (SKIMTALKEDVQVDLFRD) the chain is Extracellular. The helical transmembrane segment at 173–193 (MTFYVYFSLVLIQLVLSCFSD) threads the bilayer. Residues 194-316 (RSPLFSETIH…KEWNPSLFKV (123 aa)) lie on the Cytoplasmic side of the membrane. A Phosphotyrosine modification is found at Y277. S289 is subject to Phosphoserine. A helical transmembrane segment spans residues 317–337 (LYKTFGPYFLMSFFFKAIHDL). The region spanning 325–608 (FLMSFFFKAI…LPMVISSIVQ (284 aa)) is the ABC transmembrane type-1 1 domain. Residues 338 to 363 (MMFSGPEILKLLINFVNDTKAPDWQG) lie on the Extracellular side of the membrane. Residues 364–384 (YFYTALLFVAACLQTLVLHQY) form a helical membrane-spanning segment. Topologically, residues 385 to 440 (FHICFVSGMRIKTAVIGAVYRKALVITNAARKSSTVGEIVNLMSVDAQRFMDLATY) are cytoplasmic. Residues 441–461 (INMIWSAPLQVILALYLLWRN) traverse the membrane as a helical segment. Topologically, residues 462-464 (LGP) are extracellular. The chain crosses the membrane as a helical span at residues 465–485 (PILAGVAVMVLMVPVNAVMAM). Residues 486 to 547 (KTKTYQVAHM…VLKKSAYLAA (62 aa)) are Cytoplasmic-facing. Residue K503 is modified to N6-succinyllysine. Residues 548 to 568 (VGTFTWVCTPFLVALCTFAVY) traverse the membrane as a helical segment. Residues 569-590 (VTIDKNNVLDAQKAFVSLALFN) lie on the Extracellular side of the membrane. A helical transmembrane segment spans residues 591–611 (ILRFPLNILPMVISSIVQASV). At 612–967 (SLKRLRIFLS…VKLSVYWDYM (356 aa)) the chain is on the cytoplasmic side. Positions 644–868 (ITVRNATFTW…DGAFAEFLRT (225 aa)) constitute an ABC transporter 1 domain. 678–685 (GQVGCGKS) serves as a coordination point for ATP. The interval 871–893 (SAEQEQDPEDNGVTGVSGPGKEA) is disordered. Residues S905, S915, and S930 each carry the phosphoserine modification. Residues 917-938 (SSSYSGDVSRQHNSTAELQKDG) are disordered. The span at 922–933 (GDVSRQHNSTAE) shows a compositional bias: polar residues. The chain crosses the membrane as a helical span at residues 968–988 (KAIGLFISFLSIFLFICNHVA). Positions 975–1256 (SFLSIFLFIC…LVRMSSEMET (282 aa)) constitute an ABC transmembrane type-1 2 domain. Residues 989-1025 (ALASNYWLSLWTDDPIVNGTQEHTKVRLSVYGALGIS) lie on the Extracellular side of the membrane. An N-linked (GlcNAc...) asparagine glycan is attached at N1006. The chain crosses the membrane as a helical span at residues 1026-1046 (QGIAVFGYSMAVSIGGILASR). Residues 1047 to 1089 (CLHVDLLHSILRSPMSFFERTPSGNLVNRFSKELDTVDSMIPE) are Cytoplasmic-facing. The helical transmembrane segment at 1090-1110 (VIKMFMGSLFNVIGACIVILL) threads the bilayer. Residue A1111 is a topological domain, extracellular. A helical membrane pass occupies residues 1112–1132 (TPIAAIIIPPLGLIYFFVQRF). Over 1133–1203 (YVASSRQLKR…VANRWLAVRL (71 aa)) the chain is Cytoplasmic. A helical transmembrane segment spans residues 1204 to 1224 (ECVGNCIVLFAALFAVISRHS). Residues 1225 to 1226 (LS) lie on the Extracellular side of the membrane. The chain crosses the membrane as a helical span at residues 1227 to 1247 (AGLVGLSVSYSLQVTTYLNWL). Topologically, residues 1248 to 1531 (VRMSSEMETN…YNMARDAGLV (284 aa)) are cytoplasmic. Residues 1293 to 1527 (VEFRNYCLRY…RGLFYNMARD (235 aa)) form the ABC transporter 2 domain. 1327 to 1334 (GRTGAGKS) lines the ATP pocket.

Belongs to the ABC transporter superfamily. ABCC family. Conjugate transporter (TC 3.A.1.208) subfamily.

The protein localises to the cell membrane. The protein resides in the basolateral cell membrane. It carries out the reaction ATP + H2O + xenobioticSide 1 = ADP + phosphate + xenobioticSide 2.. The catalysed reaction is an S-substituted glutathione(in) + ATP + H2O = an S-substituted glutathione(out) + ADP + phosphate + H(+). The enzyme catalyses sphing-4-enine 1-phosphate(in) + ATP + H2O = sphing-4-enine 1-phosphate(out) + ADP + phosphate + H(+). It catalyses the reaction leukotriene C4(in) + ATP + H2O = leukotriene C4(out) + ADP + phosphate + H(+). It carries out the reaction 17beta-estradiol 17-O-(beta-D-glucuronate)(in) + ATP + H2O = 17beta-estradiol 17-O-(beta-D-glucuronate)(out) + ADP + phosphate + H(+). The catalysed reaction is daunorubicin(in) + ATP + H2O = daunorubicin(out) + ADP + phosphate + H(+). The enzyme catalyses vincristine(in) + ATP + H2O = vincristine(out) + ADP + phosphate + H(+). It catalyses the reaction 2',3'-cGAMP(in) + ATP + H2O = 2',3'-cGAMP(out) + ADP + phosphate + H(+). It carries out the reaction S-[(2E,6E,10E)-geranylgeranyl]-L-glutathione(in) + ATP + H2O = S-[(2E,6E,10E)-geranylgeranyl]-L-glutathione(out) + ADP + phosphate + H(+). The catalysed reaction is prostaglandin A2-S-(R)-glutathione(in) + ATP + H2O = prostaglandin A2-S-(R)-glutathione(out) + ADP + phosphate + H(+). The enzyme catalyses prostaglandin A2-S-(S)-glutathione(in) + ATP + H2O = prostaglandin A2-S-(S)-glutathione(out) + ADP + phosphate + H(+). MK 571 inhibits sphingosine 1-phosphate and leukotriene C4 export. Its function is as follows. Mediates export of organic anions and drugs from the cytoplasm. Mediates ATP-dependent transport of glutathione and glutathione conjugates, leukotriene C4, estradiol-17-beta-o-glucuronide, methotrexate, antiviral drugs and other xenobiotics. Confers resistance to anticancer drugs by decreasing accumulation of drug in cells, and by mediating ATP- and GSH-dependent drug export. Hydrolyzes ATP with low efficiency. Catalyzes the export of sphingosine 1-phosphate from mast cells independently of their degranulation. Participates in inflammatory response by allowing export of leukotriene C4 from leukotriene C4-synthesizing cells. Mediates ATP-dependent, GSH-independent cyclic GMP-AMP (cGAMP) export. Thus, by limiting intracellular cGAMP concentrations negatively regulates the cGAS-STING pathway. Exports S-geranylgeranyl-glutathione (GGG) in lymphoid cells and stromal compartments of lymphoid organs. ABCC1 (via extracellular transport) with GGT5 (via GGG catabolism) establish GGG gradients within lymphoid tissues to position P2RY8-positive lymphocytes at germinal centers in lymphoid follicles and restrict their chemotactic transmigration from blood vessels to the bone marrow parenchyma. Mediates basolateral export of GSH-conjugated R- and S-prostaglandin A2 diastereomers in polarized epithelial cells. This is Multidrug resistance-associated protein 1 from Macaca fascicularis (Crab-eating macaque).